The chain runs to 408 residues: Photox toxin (408 aa).

The disordered stretch occupies residues 168 to 196 (NNQQHIKDSDGRKPVNNMPPPPPPPMADK). Over residues 184–193 (NMPPPPPPPM) the composition is skewed to pro residues. The 204-residue stretch at 190 to 393 (PPPMADKTQK…LRLTDDASAD (204 aa)) folds into the TR mART core domain. Active-site residues include arginine 288, serine 318, and glutamate 355.

This sequence in the C-terminal section; belongs to the SpvB family.

It catalyses the reaction L-arginyl-[protein] + NAD(+) = N(omega)-(ADP-D-ribosyl)-L-arginyl-[protein] + nicotinamide + H(+). Mono-ADP-ribosylates chicken skeletal alpha-actin and human non-skeletal beta- and gamma-actin. Mono-ADP-ribosylates 'Arg-177' of yeast actin, blocking its ability to polymerize. Does not possess NAD(+)-glycohydrolase activity, unlike most mART enzymes. Upon expression in S.cerevisiae almost completely inhibits growth. The polypeptide is Photox toxin (phxA) (Photorhabdus laumondii subsp. laumondii (strain DSM 15139 / CIP 105565 / TT01) (Photorhabdus luminescens subsp. laumondii)).